A 71-amino-acid chain; its full sequence is Translation initiation factor IF-1 (71 aa).

The S1-like domain maps to 1–71 (MAKDAIKLRA…TKGRITYRHK (71 aa)).

It belongs to the IF-1 family. As to quaternary structure, component of the 30S ribosomal translation pre-initiation complex which assembles on the 30S ribosome in the order IF-2 and IF-3, IF-1 and N-formylmethionyl-tRNA(fMet); mRNA recruitment can occur at any time during PIC assembly.

Its subcellular location is the cytoplasm. In terms of biological role, one of the essential components for the initiation of protein synthesis. Stabilizes the binding of IF-2 and IF-3 on the 30S subunit to which N-formylmethionyl-tRNA(fMet) subsequently binds. Helps modulate mRNA selection, yielding the 30S pre-initiation complex (PIC). Upon addition of the 50S ribosomal subunit IF-1, IF-2 and IF-3 are released leaving the mature 70S translation initiation complex. The protein is Translation initiation factor IF-1 of Mycoplasmopsis synoviae (strain 53) (Mycoplasma synoviae).